The chain runs to 211 residues: Probable nicotinate-nucleotide adenylyltransferase (211 aa).

Belongs to the NadD family.

It carries out the reaction nicotinate beta-D-ribonucleotide + ATP + H(+) = deamido-NAD(+) + diphosphate. Its pathway is cofactor biosynthesis; NAD(+) biosynthesis; deamido-NAD(+) from nicotinate D-ribonucleotide: step 1/1. Its function is as follows. Catalyzes the reversible adenylation of nicotinate mononucleotide (NaMN) to nicotinic acid adenine dinucleotide (NaAD). In Lactiplantibacillus plantarum (strain ATCC BAA-793 / NCIMB 8826 / WCFS1) (Lactobacillus plantarum), this protein is Probable nicotinate-nucleotide adenylyltransferase.